Consider the following 537-residue polypeptide: ATP synthase subunit beta (537 aa).

The interval 1–61 is disordered; it reads MAKAATSKKE…SSPQKGGKKG (61 aa). The span at 7–18 shows a compositional bias: basic and acidic residues; it reads SKKEASKVEAKK. The span at 44-55 shows a compositional bias: polar residues; it reads NSPSRTGSSSPQ. 209 to 216 contributes to the ATP binding site; that stretch reads GGAGVGKT.

Belongs to the ATPase alpha/beta chains family. F-type ATPases have 2 components, CF(1) - the catalytic core - and CF(0) - the membrane proton channel. CF(1) has five subunits: alpha(3), beta(3), gamma(1), delta(1), epsilon(1). CF(0) has three main subunits: a(1), b(2) and c(9-12). The alpha and beta chains form an alternating ring which encloses part of the gamma chain. CF(1) is attached to CF(0) by a central stalk formed by the gamma and epsilon chains, while a peripheral stalk is formed by the delta and b chains.

Its subcellular location is the cell inner membrane. The catalysed reaction is ATP + H2O + 4 H(+)(in) = ADP + phosphate + 5 H(+)(out). Its function is as follows. Produces ATP from ADP in the presence of a proton gradient across the membrane. The catalytic sites are hosted primarily by the beta subunits. This chain is ATP synthase subunit beta, found in Bartonella bacilliformis (strain ATCC 35685 / KC583 / Herrer 020/F12,63).